A 303-amino-acid polypeptide reads, in one-letter code: Ribosomal RNA small subunit methyltransferase A (303 aa).

The S-adenosyl-L-methionine site is built by Asn37, Val39, Gly64, Glu85, Asp115, and Asn138.

The protein belongs to the class I-like SAM-binding methyltransferase superfamily. rRNA adenine N(6)-methyltransferase family. RsmA subfamily.

The protein resides in the cytoplasm. The enzyme catalyses adenosine(1518)/adenosine(1519) in 16S rRNA + 4 S-adenosyl-L-methionine = N(6)-dimethyladenosine(1518)/N(6)-dimethyladenosine(1519) in 16S rRNA + 4 S-adenosyl-L-homocysteine + 4 H(+). Its function is as follows. Specifically dimethylates two adjacent adenosines (A1518 and A1519) in the loop of a conserved hairpin near the 3'-end of 16S rRNA in the 30S particle. May play a critical role in biogenesis of 30S subunits. This is Ribosomal RNA small subunit methyltransferase A from Bifidobacterium adolescentis (strain ATCC 15703 / DSM 20083 / NCTC 11814 / E194a).